The chain runs to 785 residues: E3 UFM1-protein ligase 1 homolog (785 aa).

Residues 404–483 are disordered; that stretch reads GGNASNQLDD…GGGGSNKKSV (80 aa).

Belongs to the UFL1 family.

Functionally, E3 UFM1-protein ligase that mediates ufmylation of target proteins. The polypeptide is E3 UFM1-protein ligase 1 homolog (Drosophila willistoni (Fruit fly)).